A 361-amino-acid chain; its full sequence is Phenylalanine 4-monooxygenase, chloroplastic (361 aa).

A chloroplast-targeting transit peptide spans 1 to 55 (MLALRQGALLLSARGGQTTHDNLQLCAGPSRRPRARWISSAPRPSTLVERHIRPQ). Residues 47–67 (LVERHIRPQASTASDATTSTS) form a disordered region. The segment covering 56–67 (ASTASDATTSTS) has biased composition (low complexity). Fe cation is bound by residues H227, H232, and E272.

This sequence belongs to the biopterin-dependent aromatic amino acid hydroxylase family. Fe(2+) serves as cofactor.

It is found in the plastid. The protein resides in the chloroplast. It catalyses the reaction (6R)-L-erythro-5,6,7,8-tetrahydrobiopterin + L-phenylalanine + O2 = (4aS,6R)-4a-hydroxy-L-erythro-5,6,7,8-tetrahydrobiopterin + L-tyrosine. Its function is as follows. Catalyzes the hydroxylation of L-phenylalanine to L-tyrosine. Can functionally complement an Escherichia coli tyrosine auxotroph. The sequence is that of Phenylalanine 4-monooxygenase, chloroplastic from Chlamydomonas reinhardtii (Chlamydomonas smithii).